Here is a 108-residue protein sequence, read N- to C-terminus: ATP-dependent Clp protease adapter protein ClpS (108 aa).

The protein belongs to the ClpS family. As to quaternary structure, binds to the N-terminal domain of the chaperone ClpA.

Its function is as follows. Involved in the modulation of the specificity of the ClpAP-mediated ATP-dependent protein degradation. The protein is ATP-dependent Clp protease adapter protein ClpS of Ralstonia nicotianae (strain ATCC BAA-1114 / GMI1000) (Ralstonia solanacearum).